Consider the following 214-residue polypeptide: tRNA (guanine-N(7)-)-methyltransferase (214 aa).

4 residues coordinate S-adenosyl-L-methionine: Glu43, Glu68, Asn99, and Asp121. Asp121 is a catalytic residue. Substrate is bound by residues Lys125, Asp157, and 194–197; that span reads TEYE.

The protein belongs to the class I-like SAM-binding methyltransferase superfamily. TrmB family.

It catalyses the reaction guanosine(46) in tRNA + S-adenosyl-L-methionine = N(7)-methylguanosine(46) in tRNA + S-adenosyl-L-homocysteine. The protein operates within tRNA modification; N(7)-methylguanine-tRNA biosynthesis. Catalyzes the formation of N(7)-methylguanine at position 46 (m7G46) in tRNA. The polypeptide is tRNA (guanine-N(7)-)-methyltransferase (Alkaliphilus metalliredigens (strain QYMF)).